Consider the following 141-residue polypeptide: Nucleoside triphosphatase NudI (141 aa).

Residues Met-1–Leu-141 form the Nudix hydrolase domain. The Nudix box motif lies at Gly-38–Gly-59.

The protein belongs to the Nudix hydrolase family. NudI subfamily. As to quaternary structure, monomer. The cofactor is Mg(2+).

The enzyme catalyses a ribonucleoside 5'-triphosphate + H2O = a ribonucleoside 5'-phosphate + diphosphate + H(+). It carries out the reaction a 2'-deoxyribonucleoside 5'-triphosphate + H2O = a 2'-deoxyribonucleoside 5'-phosphate + diphosphate + H(+). The catalysed reaction is dUTP + H2O = dUMP + diphosphate + H(+). It catalyses the reaction dTTP + H2O = dTMP + diphosphate + H(+). The enzyme catalyses dCTP + H2O = dCMP + diphosphate + H(+). In terms of biological role, catalyzes the hydrolysis of nucleoside triphosphates, with a preference for pyrimidine deoxynucleoside triphosphates (dUTP, dTTP and dCTP). This is Nucleoside triphosphatase NudI from Escherichia coli O6:K15:H31 (strain 536 / UPEC).